A 559-amino-acid chain; its full sequence is T-complex protein 1 subunit gamma (559 aa).

An intrachain disulfide couples Cys369 to Cys375. The disordered stretch occupies residues Gly537–Gly559.

Belongs to the TCP-1 chaperonin family. Heterooligomeric complex of about 850 to 900 kDa that forms two stacked rings, 12 to 16 nm in diameter.

It localises to the cytoplasm. In terms of biological role, molecular chaperone; assists the folding of proteins upon ATP hydrolysis. Known to play a role, in vitro, in the folding of actin and tubulin. The chain is T-complex protein 1 subunit gamma from Tetrahymena pyriformis.